A 226-amino-acid polypeptide reads, in one-letter code: UPF0758 protein Daci_1904 (226 aa).

Positions 104 to 226 (ALASPEAVAR…SLSMAGQGML (123 aa)) constitute an MPN domain. The Zn(2+) site is built by histidine 175, histidine 177, and aspartate 188. The short motif at 175–188 (HNHPSGQVQASAAD) is the JAMM motif element.

It belongs to the UPF0758 family.

This is UPF0758 protein Daci_1904 from Delftia acidovorans (strain DSM 14801 / SPH-1).